The following is a 334-amino-acid chain: MSDAPAVEFRSVSKVFRTGKREHTVLHEIDLRIERGEILGVIGYSGAGKSTLARLINGLEKPTAGTIEVAGTPITGVPEARVRQLRRDIGMIFQQFNLFRSRTAAGNIEYPLKVAGWPRAKRKARVAELLEFVGLTDKARSYPDQLSGGQKQRVGIARALATSPALLLADEATSALDPETTGEVLALLRKINTELGVTIVVITHEMDVIRAVADRVAVLADGRIVELASTFDVFAAPRSAPARAFVDTVLHNRPAPEELRRLDALHTGRLVTVDVDDKRGIGAALTTAARAGVRFEVVYGGVSTLQDKTFGSITLALDGPDDAVAAVLAALDER.

Residues 7–246 (VEFRSVSKVF…PRSAPARAFV (240 aa)) form the ABC transporter domain. 43 to 50 (GYSGAGKS) provides a ligand contact to ATP.

The protein belongs to the ABC transporter superfamily. Methionine importer (TC 3.A.1.24) family. In terms of assembly, the complex is composed of two ATP-binding proteins (MetN), two transmembrane proteins (MetI) and a solute-binding protein (MetQ).

The protein resides in the cell membrane. The enzyme catalyses L-methionine(out) + ATP + H2O = L-methionine(in) + ADP + phosphate + H(+). It carries out the reaction D-methionine(out) + ATP + H2O = D-methionine(in) + ADP + phosphate + H(+). Its function is as follows. Part of the ABC transporter complex MetNIQ involved in methionine import. Responsible for energy coupling to the transport system. This chain is Methionine import ATP-binding protein MetN, found in Nocardia farcinica (strain IFM 10152).